A 251-amino-acid polypeptide reads, in one-letter code: Thiamine thiazole synthase (251 aa).

Residues Ser-34, 53–54 (EK), Gly-61, Val-125, and 151–153 (HVD) each bind NAD(+). Residues Asp-153 and His-168 each contribute to the Fe cation site. Met-216 is a binding site for NAD(+). Arg-226 serves as a coordination point for glycine.

This sequence belongs to the THI4 family. Homooctamer; tetramer of dimers. Requires Fe(2+) as cofactor.

It catalyses the reaction hydrogen sulfide + glycine + NAD(+) = ADP-5-ethyl-4-methylthiazole-2-carboxylate + nicotinamide + 3 H2O + H(+). It participates in cofactor biosynthesis; thiamine diphosphate biosynthesis. Its function is as follows. Involved in the biosynthesis of the thiazole moiety of thiamine. Catalyzes the conversion of NAD and glycine to adenosine diphosphate 5-(2-hydroxyethyl)-4-methylthiazole-2-carboxylate (ADT), an adenylated thiazole intermediate, using free sulfide as a source of sulfur. This chain is Thiamine thiazole synthase, found in Thermococcus kodakarensis (strain ATCC BAA-918 / JCM 12380 / KOD1) (Pyrococcus kodakaraensis (strain KOD1)).